The primary structure comprises 147 residues: Large ribosomal subunit protein bL9 (147 aa).

The segment at 44–63 (VKTLDAQKRSEDKRKEQEKL) is disordered. Over residues 48–63 (DAQKRSEDKRKEQEKL) the composition is skewed to basic and acidic residues.

It belongs to the bacterial ribosomal protein bL9 family.

Functionally, binds to the 23S rRNA. The protein is Large ribosomal subunit protein bL9 of Brevibacillus brevis (strain 47 / JCM 6285 / NBRC 100599).